Reading from the N-terminus, the 309-residue chain is THAP domain-containing protein 7 (309 aa).

Residues Met-1–Phe-93 form a THAP-type zinc finger. Residues Thr-158–Val-209 are disordered. The residue at position 162 (Ser-162) is a Phosphoserine. Pro residues predominate over residues Glu-198–Val-209. Ser-210 carries the post-translational modification Phosphoserine. Positions Glu-229–Tyr-232 match the HCFC1-binding motif (HBM) motif.

As to quaternary structure, forms homodimers. Interacts with HDAC3 and nuclear hormone receptor corepressors. Interacts via HBM with HCFC1.

It is found in the nucleus. The protein localises to the chromosome. Functionally, chromatin-associated, histone tail-binding protein that represses transcription via recruitment of HDAC3 and nuclear hormone receptor corepressors. This chain is THAP domain-containing protein 7 (THAP7), found in Homo sapiens (Human).